The primary structure comprises 429 residues: MTAIVSIHGRQVVDSRGNPTVEVDVTLEDGSFGRAAVPSGASTGVHEAVELRDGDKTRWGGKGVTKAVHAVNNEIANAIIGLEAEDQELIDQTMIKLDGTPNKGKFGANAILGVSLAVAKAAAEARGLPLYRYVGGTAAHVLPVPMMNIVNGGMHADNPIDFQEFMIAPVGASSINEAVRIGTEVFHTLKKELSAKGMNTNVGDEGGFAPSLDSASSALDFIVDSISKAGYKPGEDVFIALDAASSEFYNKDQNIYDLKGEGRKLTSAQLVDYYVELCGKYPIYSIEDGLAEDDFEGWKILTEKLGDKVQLVGDDLFVTNVKRLSDGIERGIANSLLVKFNQIGSLSETLAAVNMANDASYTAVMSHRSGETEDTTIADLAVATNCGQIKTGSLCRSERIAKYNQLMRIEEELGSVAKYAGRSVLRKAK.

Glutamine 163 is a (2R)-2-phosphoglycerate binding site. The active-site Proton donor is the glutamate 205. Residues aspartate 242, glutamate 287, and aspartate 314 each coordinate Mg(2+). Residues lysine 339, arginine 368, serine 369, and lysine 390 each contribute to the (2R)-2-phosphoglycerate site. Lysine 339 functions as the Proton acceptor in the catalytic mechanism.

It belongs to the enolase family. As to quaternary structure, homooctamer. Requires Mg(2+) as cofactor.

The protein resides in the cytoplasm. It is found in the secreted. It localises to the cell surface. The catalysed reaction is (2R)-2-phosphoglycerate = phosphoenolpyruvate + H2O. The protein operates within carbohydrate degradation; glycolysis; pyruvate from D-glyceraldehyde 3-phosphate: step 4/5. Functionally, catalyzes the reversible conversion of 2-phosphoglycerate (2-PG) into phosphoenolpyruvate (PEP). It is essential for the degradation of carbohydrates via glycolysis. This Zymomonas mobilis subsp. mobilis (strain ATCC 31821 / ZM4 / CP4) protein is Enolase.